The sequence spans 503 residues: Glycoprotein 3-alpha-L-fucosyltransferase A (503 aa).

The Cytoplasmic portion of the chain corresponds to 1–10 (MRRPKISLKK). Residues 11-28 (YFYLTLICALLLIFGFSL) traverse the membrane as a helical; Signal-anchor for type II membrane protein segment. The Lumenal segment spans residues 29–503 (KEREIWKTLS…KDVISDSSDD (475 aa)). A disordered region spans residues 44–71 (ITTQQQQHQHLHQLQSMDEEHPMATSST). The segment covering 47–58 (QQQQHQHLHQLQ) has biased composition (low complexity). N-linked (GlcNAc...) asparagine glycans are attached at residues Asn262, Asn295, and Asn299.

It belongs to the glycosyltransferase 10 family. Mn(2+) serves as cofactor.

Its subcellular location is the golgi apparatus. The protein localises to the golgi stack membrane. The enzyme catalyses N(4)-{beta-D-GlcNAc-(1-&gt;2)-alpha-D-Man-(1-&gt;3)-[beta-D-GlcNAc-(1-&gt;2)-alpha-D-Man-(1-&gt;6)]-beta-D-Man-(1-&gt;4)-beta-D-GlcNAc-(1-&gt;4)-beta-D-GlcNAc}-L-asparaginyl-[protein] + GDP-beta-L-fucose = N(4)-{beta-D-GlcNAc-(1-&gt;2)-alpha-D-Man-(1-&gt;3)-[beta-D-GlcNAc-(1-&gt;2)-alpha-D-Man-(1-&gt;6)]-beta-D-Man-(1-&gt;4)-beta-D-GlcNAc-(1-&gt;4)-[alpha-L-Fuc(1-&gt;3)]-beta-D-GlcNAc}-L-asparaginyl-[protein] + GDP + H(+). Its pathway is protein modification; protein glycosylation. Functionally, catalyzes alpha-1,3 glycosidic linkages of N-glycans. Plays a role in neuronal development by promoting ventral nerve cord formation, possibly by promoting interactions between migrating cells and the extracellular matrix or by promoting neural activity. The protein is Glycoprotein 3-alpha-L-fucosyltransferase A (FucTA) of Drosophila melanogaster (Fruit fly).